Here is a 211-residue protein sequence, read N- to C-terminus: Nucleoside triphosphate pyrophosphatase (211 aa).

Asp75 (proton acceptor) is an active-site residue.

The protein belongs to the Maf family. A divalent metal cation is required as a cofactor.

It is found in the cytoplasm. It carries out the reaction a ribonucleoside 5'-triphosphate + H2O = a ribonucleoside 5'-phosphate + diphosphate + H(+). The enzyme catalyses a 2'-deoxyribonucleoside 5'-triphosphate + H2O = a 2'-deoxyribonucleoside 5'-phosphate + diphosphate + H(+). Functionally, nucleoside triphosphate pyrophosphatase. May have a dual role in cell division arrest and in preventing the incorporation of modified nucleotides into cellular nucleic acids. This Prochlorococcus marinus (strain NATL1A) protein is Nucleoside triphosphate pyrophosphatase.